Consider the following 290-residue polypeptide: Shikimate dehydrogenase (NADP(+)) (290 aa).

Shikimate contacts are provided by residues Ser20–Ser22 and Thr67. Lys71 acts as the Proton acceptor in catalysis. Residues Asn92 and Asp107 each coordinate shikimate. NADP(+) contacts are provided by residues Gly132–Ala136 and Met228. Tyr230 serves as a coordination point for shikimate. Gly251 serves as a coordination point for NADP(+).

Belongs to the shikimate dehydrogenase family. In terms of assembly, homodimer.

The catalysed reaction is shikimate + NADP(+) = 3-dehydroshikimate + NADPH + H(+). The protein operates within metabolic intermediate biosynthesis; chorismate biosynthesis; chorismate from D-erythrose 4-phosphate and phosphoenolpyruvate: step 4/7. In terms of biological role, involved in the biosynthesis of the chorismate, which leads to the biosynthesis of aromatic amino acids. Catalyzes the reversible NADPH linked reduction of 3-dehydroshikimate (DHSA) to yield shikimate (SA). The polypeptide is Shikimate dehydrogenase (NADP(+)) (Geobacter sp. (strain M21)).